Here is a 432-residue protein sequence, read N- to C-terminus: MANVVVIGAQWGDEGKGKVVDIYTEFADDVVRYQGGNNAGHTLVVGDEKVILHLIPSGILHEGKRCVIGNGVVLDPEVFIMEITKLKANGYLKDDKMLLLSEALHIIMPYHKRIDIAREKKSGSKKIGTTGRGIGPAYEDKIGRRGIRLMDLLDEKAFTRKVKEVLEEKNLILTQLLGEQPFTFEEIYEEYMKYAETLRKYAADTSLILHQEIKAGKSLLFEGAQGTLLDVDHGTYPYVTSSSTCSGGACTGSGVSPREIHEVIGISKAYATRVGSGPFPTELEDETGEQLRQAGREFGSTTGRPRRTGWYDALVARYAVRINGLSGIAITKLDVLSGQETVKVCTAYNYKGQVLTEVPASLEVMELCTPIYEELPGWNEDITGAKSMAELPKNARDYVARVEELSGAPVVLVSVGPRRDETIVLRNPFQLD.

GTP contacts are provided by residues 12–18 (GDEGKGK) and 40–42 (GHT). The active-site Proton acceptor is aspartate 13. Mg(2+)-binding residues include aspartate 13 and glycine 40. IMP contacts are provided by residues 13–16 (DEGK), 38–41 (NAGH), threonine 130, arginine 144, glutamine 225, threonine 240, and arginine 304. Histidine 41 functions as the Proton donor in the catalytic mechanism. Position 300 to 306 (300 to 306 (STTGRPR)) interacts with substrate. Residues arginine 306, 332-334 (KLD), and 414-416 (SVG) contribute to the GTP site.

This sequence belongs to the adenylosuccinate synthetase family. As to quaternary structure, homodimer. It depends on Mg(2+) as a cofactor.

It is found in the cytoplasm. It carries out the reaction IMP + L-aspartate + GTP = N(6)-(1,2-dicarboxyethyl)-AMP + GDP + phosphate + 2 H(+). Its pathway is purine metabolism; AMP biosynthesis via de novo pathway; AMP from IMP: step 1/2. Plays an important role in the de novo pathway of purine nucleotide biosynthesis. Catalyzes the first committed step in the biosynthesis of AMP from IMP. The chain is Adenylosuccinate synthetase from Geobacter sp. (strain M21).